A 185-amino-acid polypeptide reads, in one-letter code: Neuronal vesicle trafficking-associated protein 1 (185 aa).

Residues Met-1–Lys-82 are Cytoplasmic-facing. The chain crosses the membrane as a helical; Signal-anchor for type II membrane protein span at residues Val-83–Tyr-103. The Lumenal segment spans residues Lys-104 to Ala-185. The required for GRIP1 interaction stretch occupies residues Glu-129–Trp-164.

Belongs to the NSG family. As to quaternary structure, forms a complex with GRIP1, GRIA2 and STX12 through direct interaction with GRIP1; controls the intracellular fate of AMPAR and the endosomal sorting of the GRIA2 subunit toward recycling and membrane targeting. Interacts with STX12. Interacts with APP; could regulate APP processing. Interacts with FAM171A1.

The protein resides in the membrane. It is found in the golgi apparatus. Its subcellular location is the trans-Golgi network membrane. The protein localises to the endosome membrane. It localises to the cell projection. The protein resides in the dendrite. It is found in the early endosome membrane. Its subcellular location is the late endosome membrane. The protein localises to the lysosome lumen. It localises to the recycling endosome membrane. The protein resides in the cytoplasmic vesicle membrane. It is found in the golgi stack membrane. Its subcellular location is the endosome. The protein localises to the multivesicular body membrane. It localises to the endoplasmic reticulum membrane. Functionally, plays a role in the recycling mechanism in neurons of multiple receptors, including AMPAR, APP and L1CAM and acts at the level of early endosomes to promote sorting of receptors toward a recycling pathway. Regulates sorting and recycling of GRIA2 through interaction with GRIP1 and then contributes to the regulation of synaptic transmission and plasticity by affecting the recycling and targeting of AMPA receptors to the synapse. Is required for faithful sorting of L1CAM to axons by facilitating trafficking from somatodendritic early endosome or the recycling endosome. In an other hand, induces apoptosis via the activation of CASP3 in response to DNA damage. This Macaca fascicularis (Crab-eating macaque) protein is Neuronal vesicle trafficking-associated protein 1.